A 358-amino-acid chain; its full sequence is tRNA-specific 2-thiouridylase MnmA (358 aa).

Residues 8–15 (GLSGGVDS) and Met-34 contribute to the ATP site. An interaction with target base in tRNA region spans residues 94 to 96 (NPD). Cys-99 (nucleophile) is an active-site residue. Cys-99 and Cys-196 are oxidised to a cystine. Gly-123 is an ATP binding site. The segment at 146-148 (KDQ) is interaction with tRNA. The active-site Cysteine persulfide intermediate is Cys-196. The interval 308–309 (RY) is interaction with tRNA.

The protein belongs to the MnmA/TRMU family.

It is found in the cytoplasm. The catalysed reaction is S-sulfanyl-L-cysteinyl-[protein] + uridine(34) in tRNA + AH2 + ATP = 2-thiouridine(34) in tRNA + L-cysteinyl-[protein] + A + AMP + diphosphate + H(+). Its function is as follows. Catalyzes the 2-thiolation of uridine at the wobble position (U34) of tRNA, leading to the formation of s(2)U34. The protein is tRNA-specific 2-thiouridylase MnmA of Thiobacillus denitrificans (strain ATCC 25259 / T1).